The sequence spans 365 residues: D-alanine--D-alanine ligase (365 aa).

The region spanning 156–360 (KKLMAAEGLP…YAQLLDNLIE (205 aa)) is the ATP-grasp domain. An ATP-binding site is contributed by 183–238 (KRELGLPVFVKPARGGSSIGISRVADWSEWDAALSLAREHDSKVIVEAEIVGVEVE). Positions 315, 327, and 329 each coordinate Mg(2+).

This sequence belongs to the D-alanine--D-alanine ligase family. Requires Mg(2+) as cofactor. Mn(2+) is required as a cofactor.

It is found in the cytoplasm. The enzyme catalyses 2 D-alanine + ATP = D-alanyl-D-alanine + ADP + phosphate + H(+). It participates in cell wall biogenesis; peptidoglycan biosynthesis. Cell wall formation. The chain is D-alanine--D-alanine ligase from Corynebacterium diphtheriae (strain ATCC 700971 / NCTC 13129 / Biotype gravis).